A 406-amino-acid chain; its full sequence is Testis-specific Y-encoded-like protein 5 (406 aa).

Over residues 1 to 25 (MSGRSRGRKSSRAKGRGKGRARARV) the composition is skewed to basic residues. Disordered regions lie at residues 1–67 (MSGR…PAEL), 132–164 (IGNRRVPGRKAPDTRSATGRGPQATVSGKPKMA), and 382–406 (RGEKGKEERPGPAKLSPAPAVRQPN). A compositionally biased stretch (basic and acidic residues) spans 27–38 (AAAEDAWHDEKP). Positions 49 to 62 (AAAQVQAGAAQGGA) are enriched in low complexity. Residues 382–392 (RGEKGKEERPG) are compositionally biased toward basic and acidic residues.

This sequence belongs to the nucleosome assembly protein (NAP) family. Interacts with USP7.

Involved in modulation of cell growth and cellular response to gamma radiation probably via regulation of the Akt signaling pathway. Involved in regulation of p53/TP53. Suppresses p53/TP53 protein levels and promotes its ubiquitination; the function is dependent on USP7 and independent on MDM2. Proposed to displace p53/TP53 from interaction with USP7. This Mus musculus (Mouse) protein is Testis-specific Y-encoded-like protein 5 (Tspyl5).